Consider the following 339-residue polypeptide: Undifferentiated embryonic cell transcription factor 1 (339 aa).

Disordered stretches follow at residues 1–62 and 144–270; these read MLLR…QRTP and MGLL…QVAP. Phosphoserine occurs at positions 15, 18, 48, and 54. The span at 154 to 170 shows a compositional bias: basic residues; sequence RVRRRSTGPGRPQRRGR. Low complexity-rich tracts occupy residues 171–193 and 218–229; these read SSLS…PLAA and TSSPPLTSTDTL. The segment covering 261–270 has biased composition (polar residues); the sequence is GRASSPQVAP. The tract at residues 279–310 is leucine-zipper; it reads QTLTHLGDISTVLGPLRDQLSTLNQHVEHLRG.

As to quaternary structure, binds to the N-terminal region of ATF2. Associates with the TFIID complex through interaction with TBP. Post-translationally, phosphorylated. As to expression, expressed mainly in pluripotent cells with expression rapidly down-regulated upon cell differentiation.

It localises to the nucleus. Its function is as follows. Acts as a transcriptional coactivator of ATF2. This Mus musculus (Mouse) protein is Undifferentiated embryonic cell transcription factor 1.